Consider the following 213-residue polypeptide: Large ribosomal subunit protein uL3 (213 aa).

Gln-151 is modified (N5-methylglutamine).

The protein belongs to the universal ribosomal protein uL3 family. In terms of assembly, part of the 50S ribosomal subunit. Forms a cluster with proteins L14 and L19. Methylated by PrmB.

Functionally, one of the primary rRNA binding proteins, it binds directly near the 3'-end of the 23S rRNA, where it nucleates assembly of the 50S subunit. The protein is Large ribosomal subunit protein uL3 of Rhizobium leguminosarum bv. trifolii (strain WSM2304).